A 1318-amino-acid polypeptide reads, in one-letter code: Maestro heat-like repeat family member 5 (1318 aa).

Residues 1-38 form a disordered region; that stretch reads MDRQCSERPYSCTPTGRVSSAVSQNSRISPPVSTSMKD. A compositionally biased stretch (polar residues) spans 12–38; that stretch reads CTPTGRVSSAVSQNSRISPPVSTSMKD. Residues 581-618 form an HEAT 1 repeat; sequence DELHFLLSHLYIWLASEKAHERQRAVHSCMILLKFLNH. A disordered region spans residues 676-695; that stretch reads ESQAPKELSQAHSDGAPLWN. HEAT repeat units lie at residues 769–811, 840–880, 996–1033, 1037–1074, 1076–1113, 1118–1155, 1164–1200, and 1278–1315; these read GAKL…SHTC, PTSH…LLAA, RQIPAVLRQLLPSLQSPQERERKVAILILTKFLYSPVL, LPKQAALTVLAQGLHDPSPEVRVLSLQGLSNILFHPDK, SLLQGQLRPLLDGFFQSSDQVIVCIMGTVSDTLHRLGA, SQSLGVAISTRSFFNDERDGIRAAAMALFGDLVAAMAD, QVHQSMVPLLLHLKDQCPAVATQAKFTFYRCAVLLRW, and VDTNLLFRTFEHLRSDPEPSIREFATSQLSFLQKVSAR.

The protein is Maestro heat-like repeat family member 5 (MROH5) of Homo sapiens (Human).